The sequence spans 147 residues: RxLR effector protein Avr3a (147 aa).

An N-terminal signal peptide occupies residues 1–21 (MRLAIMLSATAVAINFATSSA). A RxLR-dEER motif is present at residues 44-59 (RLLRKNEENEETSEER). Lys-48 carries the N6-acetyllysine modification. An effector domain region spans residues 77–147 (ALTERADAKK…YMMHLGLTGY (71 aa)).

It belongs to the RxLR effector family. As to quaternary structure, forms homodimers via the RxLR-dEER motif. Interacts with host E3 ligase CMPG1. Interacts with host DRP2. In terms of processing, proteolytically cleaved. The cleavage site directly after the RxLR sequence and the high conservation among other effector proteins suggest that the RxLR motif might play a crucial role in the intracellular processing before secretion. Glycosylated. Post-translationally, N-acetylated at Lys-48 after cleavage.

The protein localises to the secreted. It localises to the host cytoplasm. Multifunctional effector that can suppress host BAK1/SERK3-mediated immunity through at least two different pathways. Manipulates plant immunity by targeting and stabilizing host E3 ligase CMPG1. Preventing the normal 26S proteasome-dependent degradation of potato CMPG1, and thus potentially of its protein substrates in the host cell, further abolishes host cell death during the biotrophic phase of infection. Also associates with and affects the function of the dynamin-related protein 2 (DRP2), a plant GTPase involved in immune receptor-mediated endocytosis. The Avr3a(EM) form evades recognition by R3a, thus does not trigger R3a-mediated hypersensitivity and does not suppress INF1-induced cell death. The polypeptide is RxLR effector protein Avr3a (Phytophthora infestans (Potato late blight agent)).